We begin with the raw amino-acid sequence, 376 residues long: Chaperone protein DnaJ 2 (376 aa).

A J domain is found at 5–70 (DYYEVLGVNR…QKRAAYDRYG (66 aa)). Residues 135 to 213 (GADKTIRIPT…CGGAGRVKRQ (79 aa)) form a CR-type zinc finger. Residues C148, C151, C165, C168, C187, C190, C201, and C204 each coordinate Zn(2+). 4 CXXCXGXG motif repeats span residues 148-155 (CETCHGSG), 165-172 (CPTCGGAG), 187-194 (CPKCHGTG), and 201-208 (CRDCGGAG).

It belongs to the DnaJ family. In terms of assembly, homodimer. The cofactor is Zn(2+).

Its subcellular location is the cytoplasm. Functionally, participates actively in the response to hyperosmotic and heat shock by preventing the aggregation of stress-denatured proteins and by disaggregating proteins, also in an autonomous, DnaK-independent fashion. Unfolded proteins bind initially to DnaJ; upon interaction with the DnaJ-bound protein, DnaK hydrolyzes its bound ATP, resulting in the formation of a stable complex. GrpE releases ADP from DnaK; ATP binding to DnaK triggers the release of the substrate protein, thus completing the reaction cycle. Several rounds of ATP-dependent interactions between DnaJ, DnaK and GrpE are required for fully efficient folding. Also involved, together with DnaK and GrpE, in the DNA replication of plasmids through activation of initiation proteins. This is Chaperone protein DnaJ 2 from Aromatoleum aromaticum (strain DSM 19018 / LMG 30748 / EbN1) (Azoarcus sp. (strain EbN1)).